A 214-amino-acid chain; its full sequence is Adenylate kinase (214 aa).

10–15 is a binding site for ATP; it reads GAGKGT. An NMP region spans residues 30-59; sequence STGDMLRAAVKSGSELGKQAKDIMDAGKLV. AMP contacts are provided by residues Thr-31, Arg-36, 57–59, 85–88, and Gln-92; these read KLV and GFPR. Positions 122-159 are LID; that stretch reads GRRVHAPSGRVYHVKFNPPKVEGKDDVTGEELTTRKDD. ATP is bound by residues Arg-123 and 132 to 133; that span reads VY. Residues Arg-156 and Arg-167 each coordinate AMP. N6-acetyllysine is present on Lys-192. Lys-200 is an ATP binding site.

This sequence belongs to the adenylate kinase family. Monomer.

Its subcellular location is the cytoplasm. It carries out the reaction AMP + ATP = 2 ADP. It participates in purine metabolism; AMP biosynthesis via salvage pathway; AMP from ADP: step 1/1. In terms of biological role, catalyzes the reversible transfer of the terminal phosphate group between ATP and AMP. Plays an important role in cellular energy homeostasis and in adenine nucleotide metabolism. This chain is Adenylate kinase, found in Escherichia coli O8 (strain IAI1).